A 448-amino-acid polypeptide reads, in one-letter code: tRNA wybutosine-synthesizing protein 2 homolog (448 aa).

Residues serine 218, lysine 225, glutamate 265, and 293 to 294 (DN) contribute to the S-adenosyl-L-methionine site.

This sequence belongs to the class I-like SAM-binding methyltransferase superfamily. TRM5/TYW2 family.

It catalyses the reaction 4-demethylwyosine(37) in tRNA(Phe) + S-adenosyl-L-methionine = 4-demethyl-7-[(3S)-3-amino-3-carboxypropyl]wyosine(37) in tRNA(Phe) + S-methyl-5'-thioadenosine + H(+). It participates in tRNA modification; wybutosine-tRNA(Phe) biosynthesis. In terms of biological role, S-adenosyl-L-methionine-dependent transferase that acts as a component of the wybutosine biosynthesis pathway. Wybutosine is a hyper modified guanosine with a tricyclic base found at the 3'-position adjacent to the anticodon of eukaryotic phenylalanine tRNA. Catalyzes the transfer of the alpha-amino-alpha-carboxypropyl (acp) group from S-adenosyl-L-methionine to the C-7 position of 4-demethylwyosine (imG-14) to produce wybutosine-86. In Homo sapiens (Human), this protein is tRNA wybutosine-synthesizing protein 2 homolog (TRMT12).